The sequence spans 182 residues: Large ribosomal subunit protein uL5 (182 aa).

It belongs to the universal ribosomal protein uL5 family. In terms of assembly, part of the 50S ribosomal subunit; part of the 5S rRNA/L5/L18/L25 subcomplex. Contacts the 5S rRNA and the P site tRNA. Forms a bridge to the 30S subunit in the 70S ribosome.

This is one of the proteins that bind and probably mediate the attachment of the 5S RNA into the large ribosomal subunit, where it forms part of the central protuberance. In the 70S ribosome it contacts protein S13 of the 30S subunit (bridge B1b), connecting the 2 subunits; this bridge is implicated in subunit movement. Contacts the P site tRNA; the 5S rRNA and some of its associated proteins might help stabilize positioning of ribosome-bound tRNAs. The protein is Large ribosomal subunit protein uL5 of Borrelia hermsii (strain HS1 / DAH).